The following is a 450-amino-acid chain: MLKYFGTDGVRGVANQGLTPEMAFKLGRDGGYVLTKNKKDGEQAKVLVSRDTRISGQMLEYALISGLLSVGIEVLEVGVITTPGLSYLVRAQGADAGVQISASHNPVEDNGIKFFGSDGLKLSDEMEEEIEKLIDAKGDNLPRPSAEGLGTVTDFHEGSAKYLQFIENTIPEDLDGIKVVIDGANGASSALISRLFADCGVDFTTIYTHPNGLNINDHCGATHTENLQKEVVKQGAQLGLAFDGDADRCIAVDENGNEVDGDHIMYVIGSYLAEHGRLKKDTIVTTVMSNLGFTKALEKEGLKNVRTQVGDRYVSEEMRAHGYNLGGEQSGHVIMSDYHNTGDGMLTGLHLMLVMKKTGKSLSELLKDFKDYPQGLVNVPVKDKKSWKEHQPILDVIAEVEKDMNGNGRVLVRPSGTQDLLRVMAEGPTQEETDAYVDRIVKVVEKEMGK.

The active-site Phosphoserine intermediate is the serine 103. Residues serine 103, aspartate 243, aspartate 245, and aspartate 247 each coordinate Mg(2+). At serine 103 the chain carries Phosphoserine.

Belongs to the phosphohexose mutase family. It depends on Mg(2+) as a cofactor. Activated by phosphorylation.

The catalysed reaction is alpha-D-glucosamine 1-phosphate = D-glucosamine 6-phosphate. In terms of biological role, catalyzes the conversion of glucosamine-6-phosphate to glucosamine-1-phosphate. The protein is Phosphoglucosamine mutase of Lactobacillus helveticus (strain DPC 4571).